The primary structure comprises 565 residues: Oxygen-dependent choline dehydrogenase (565 aa).

An FAD-binding site is contributed by 6 to 35; sequence DYIIVGAGSAGNTLATRLTEDAGVTVLLLE. His475 functions as the Proton acceptor in the catalytic mechanism.

This sequence belongs to the GMC oxidoreductase family. It depends on FAD as a cofactor.

It catalyses the reaction choline + A = betaine aldehyde + AH2. The enzyme catalyses betaine aldehyde + NAD(+) + H2O = glycine betaine + NADH + 2 H(+). It participates in amine and polyamine biosynthesis; betaine biosynthesis via choline pathway; betaine aldehyde from choline (cytochrome c reductase route): step 1/1. Its function is as follows. Involved in the biosynthesis of the osmoprotectant glycine betaine. Catalyzes the oxidation of choline to betaine aldehyde and betaine aldehyde to glycine betaine at the same rate. The sequence is that of Oxygen-dependent choline dehydrogenase from Pseudomonas putida (strain ATCC 700007 / DSM 6899 / JCM 31910 / BCRC 17059 / LMG 24140 / F1).